The following is a 272-amino-acid chain: Small ribosomal subunit protein uS2 (272 aa).

The interval 238 to 272 (ASKEEQTEEAEEETLSSKYREQDFQEAKSGARGEK) is disordered. Basic and acidic residues predominate over residues 255–272 (KYREQDFQEAKSGARGEK).

The protein belongs to the universal ribosomal protein uS2 family.

This Protochlamydia amoebophila (strain UWE25) protein is Small ribosomal subunit protein uS2.